The primary structure comprises 254 residues: UDP-2,3-diacylglucosamine hydrolase (254 aa).

Mn(2+) contacts are provided by aspartate 8, histidine 10, aspartate 41, asparagine 79, and histidine 114. 79–80 (NR) contributes to the substrate binding site. 5 residues coordinate substrate: aspartate 122, serine 160, asparagine 164, lysine 167, and histidine 195. Residues histidine 195 and histidine 197 each coordinate Mn(2+).

The protein belongs to the LpxH family. Mn(2+) is required as a cofactor.

The protein localises to the cell inner membrane. The catalysed reaction is UDP-2-N,3-O-bis[(3R)-3-hydroxytetradecanoyl]-alpha-D-glucosamine + H2O = 2-N,3-O-bis[(3R)-3-hydroxytetradecanoyl]-alpha-D-glucosaminyl 1-phosphate + UMP + 2 H(+). The protein operates within glycolipid biosynthesis; lipid IV(A) biosynthesis; lipid IV(A) from (3R)-3-hydroxytetradecanoyl-[acyl-carrier-protein] and UDP-N-acetyl-alpha-D-glucosamine: step 4/6. Functionally, hydrolyzes the pyrophosphate bond of UDP-2,3-diacylglucosamine to yield 2,3-diacylglucosamine 1-phosphate (lipid X) and UMP by catalyzing the attack of water at the alpha-P atom. Involved in the biosynthesis of lipid A, a phosphorylated glycolipid that anchors the lipopolysaccharide to the outer membrane of the cell. The polypeptide is UDP-2,3-diacylglucosamine hydrolase (Aeromonas salmonicida (strain A449)).